The chain runs to 254 residues: Phosphoribosylaminoimidazole-succinocarboxamide synthase (254 aa).

It belongs to the SAICAR synthetase family.

The enzyme catalyses 5-amino-1-(5-phospho-D-ribosyl)imidazole-4-carboxylate + L-aspartate + ATP = (2S)-2-[5-amino-1-(5-phospho-beta-D-ribosyl)imidazole-4-carboxamido]succinate + ADP + phosphate + 2 H(+). Its pathway is purine metabolism; IMP biosynthesis via de novo pathway; 5-amino-1-(5-phospho-D-ribosyl)imidazole-4-carboxamide from 5-amino-1-(5-phospho-D-ribosyl)imidazole-4-carboxylate: step 1/2. This Rhodospirillum centenum (strain ATCC 51521 / SW) protein is Phosphoribosylaminoimidazole-succinocarboxamide synthase.